A 249-amino-acid polypeptide reads, in one-letter code: Flagellar brake protein YcgR (249 aa).

One can recognise a PilZ domain in the interval 117–236; the sequence is QRREFFRVDA…ERELQQVIFS (120 aa).

This sequence belongs to the YcgR family. Monomer. Interacts with the flagellar basal bodies.

The protein localises to the bacterial flagellum basal body. Acts as a flagellar brake, regulating swimming and swarming in a bis-(3'-5') cyclic diguanylic acid (c-di-GMP)-dependent manner. Binds 1 c-di-GMP dimer per subunit. Increasing levels of c-di-GMP lead to decreased motility. This Erwinia tasmaniensis (strain DSM 17950 / CFBP 7177 / CIP 109463 / NCPPB 4357 / Et1/99) protein is Flagellar brake protein YcgR.